We begin with the raw amino-acid sequence, 231 residues long: MKKVSRNLLQARQMVDKNRFYSLEEAMELVKKTSYTKFSGSVDLAIRLNLDTRKADQQLRGAVVLPHGTGKSVRVLVATDSSEVAAKSLEAGADLIYSTAELEQNLKIDNFNFDVIVVEPKLMPILGRYGKKLGPKGLMPNPKTGTVSPNPEKAVAEIKKGKANYRADRYGIIHSLIGKTNMEVPQLVENANTLLRLIKRLKPNTVKGNYFKNLTVSASMGPSIKIRFDNL.

It belongs to the universal ribosomal protein uL1 family. As to quaternary structure, part of the 50S ribosomal subunit.

Its function is as follows. Binds directly to 23S rRNA. The L1 stalk is quite mobile in the ribosome, and is involved in E site tRNA release. Protein L1 is also a translational repressor protein, it controls the translation of the L11 operon by binding to its mRNA. This is Large ribosomal subunit protein uL1 from Mesomycoplasma hyopneumoniae (strain 232) (Mycoplasma hyopneumoniae).